The primary structure comprises 265 residues: uncharacterized protein (265 aa).

This is an uncharacterized protein from Autographa californica nuclear polyhedrosis virus (AcMNPV).